The following is a 78-amino-acid chain: Large ribosomal subunit protein bL28 (78 aa).

The protein belongs to the bacterial ribosomal protein bL28 family.

The sequence is that of Large ribosomal subunit protein bL28 from Hamiltonella defensa subsp. Acyrthosiphon pisum (strain 5AT).